A 94-amino-acid chain; its full sequence is Pyrimidine/purine nucleoside phosphorylase (94 aa).

It belongs to the nucleoside phosphorylase PpnP family.

It carries out the reaction a purine D-ribonucleoside + phosphate = a purine nucleobase + alpha-D-ribose 1-phosphate. The enzyme catalyses adenosine + phosphate = alpha-D-ribose 1-phosphate + adenine. It catalyses the reaction cytidine + phosphate = cytosine + alpha-D-ribose 1-phosphate. The catalysed reaction is guanosine + phosphate = alpha-D-ribose 1-phosphate + guanine. It carries out the reaction inosine + phosphate = alpha-D-ribose 1-phosphate + hypoxanthine. The enzyme catalyses thymidine + phosphate = 2-deoxy-alpha-D-ribose 1-phosphate + thymine. It catalyses the reaction uridine + phosphate = alpha-D-ribose 1-phosphate + uracil. The catalysed reaction is xanthosine + phosphate = alpha-D-ribose 1-phosphate + xanthine. Functionally, catalyzes the phosphorolysis of diverse nucleosides, yielding D-ribose 1-phosphate and the respective free bases. Can use uridine, adenosine, guanosine, cytidine, thymidine, inosine and xanthosine as substrates. Also catalyzes the reverse reactions. The chain is Pyrimidine/purine nucleoside phosphorylase from Salmonella agona (strain SL483).